The chain runs to 310 residues: N-acetyl-gamma-glutamyl-phosphate reductase (310 aa).

The active site involves Cys117.

Belongs to the NAGSA dehydrogenase family. Type 2 subfamily.

Its subcellular location is the cytoplasm. The enzyme catalyses N-acetyl-L-glutamate 5-semialdehyde + phosphate + NADP(+) = N-acetyl-L-glutamyl 5-phosphate + NADPH + H(+). The protein operates within amino-acid biosynthesis; L-arginine biosynthesis; N(2)-acetyl-L-ornithine from L-glutamate: step 3/4. Catalyzes the NADPH-dependent reduction of N-acetyl-5-glutamyl phosphate to yield N-acetyl-L-glutamate 5-semialdehyde. This Rhizobium leguminosarum bv. trifolii (strain WSM2304) protein is N-acetyl-gamma-glutamyl-phosphate reductase.